The primary structure comprises 149 residues: Large ribosomal subunit protein bL9 (149 aa).

It belongs to the bacterial ribosomal protein bL9 family.

Binds to the 23S rRNA. In Legionella pneumophila (strain Paris), this protein is Large ribosomal subunit protein bL9.